The sequence spans 963 residues: Unconventional myosin-XIX (963 aa).

Positions 35–758 constitute a Myosin motor domain; sequence HQLDDLTKVN…MLELLECGRA (724 aa). 132–139 serves as a coordination point for ATP; that stretch reads GESGAGKT. The segment at 602 to 624 is actin-binding; that stretch reads LEQLLQVLHNTTPHYIRCIKPNS. IQ domains follow at residues 762–782 and 783–812; these read EQCARCIQCGWRRHRLQKQEK and QRRAAVLIQAAFRSWLTRKHIRRLHIAATV. Residues 829–963 are myMOMA region; the sequence is SKELDGMEEK…LLESHRPVQV (135 aa).

It belongs to the TRAFAC class myosin-kinesin ATPase superfamily. Myosin family. In terms of assembly, myosin is a hexamer of 2 heavy chains and 4 light chains: interacts with myosin light chains MYL9 and MYL12B.

It is found in the mitochondrion outer membrane. The protein localises to the cytoplasm. The protein resides in the cytoskeleton. Its function is as follows. Actin-based motor molecule with ATPase activity that localizes to the mitochondrion outer membrane. Motor protein that moves towards the plus-end of actin filaments. Required for mitochondrial inheritance during mitosis. May be involved in mitochondrial transport or positioning. The protein is Unconventional myosin-XIX of Mus musculus (Mouse).